Here is a 378-residue protein sequence, read N- to C-terminus: Histidine decarboxylase (378 aa).

His120 contributes to the substrate binding site. Position 233 is an N6-(pyridoxal phosphate)lysine (Lys233). The active site involves Ser323.

It belongs to the group II decarboxylase family. As to quaternary structure, homotetramer. Requires pyridoxal 5'-phosphate as cofactor.

It catalyses the reaction L-histidine + H(+) = histamine + CO2. In Morganella morganii (Proteus morganii), this protein is Histidine decarboxylase (hdc).